The following is a 251-amino-acid chain: Aspartate/glutamate leucyltransferase (251 aa).

The protein belongs to the R-transferase family. Bpt subfamily.

It is found in the cytoplasm. The catalysed reaction is N-terminal L-glutamyl-[protein] + L-leucyl-tRNA(Leu) = N-terminal L-leucyl-L-glutamyl-[protein] + tRNA(Leu) + H(+). It carries out the reaction N-terminal L-aspartyl-[protein] + L-leucyl-tRNA(Leu) = N-terminal L-leucyl-L-aspartyl-[protein] + tRNA(Leu) + H(+). In terms of biological role, functions in the N-end rule pathway of protein degradation where it conjugates Leu from its aminoacyl-tRNA to the N-termini of proteins containing an N-terminal aspartate or glutamate. This is Aspartate/glutamate leucyltransferase from Xanthomonas oryzae pv. oryzae (strain MAFF 311018).